Here is a 208-residue protein sequence, read N- to C-terminus: Small ribosomal subunit protein uS4 (208 aa).

Positions 30 to 51 (KSSLEKRPYAPGQHGQRRSKIS) are disordered. An S4 RNA-binding domain is found at 98 to 161 (RRLDNVVYRM…KNNPQVQRSI (64 aa)).

It belongs to the universal ribosomal protein uS4 family. In terms of assembly, part of the 30S ribosomal subunit. Contacts protein S5. The interaction surface between S4 and S5 is involved in control of translational fidelity.

In terms of biological role, one of the primary rRNA binding proteins, it binds directly to 16S rRNA where it nucleates assembly of the body of the 30S subunit. Functionally, with S5 and S12 plays an important role in translational accuracy. This chain is Small ribosomal subunit protein uS4, found in Wolinella succinogenes (strain ATCC 29543 / DSM 1740 / CCUG 13145 / JCM 31913 / LMG 7466 / NCTC 11488 / FDC 602W) (Vibrio succinogenes).